A 529-amino-acid polypeptide reads, in one-letter code: 1,4-beta-D-glucan cellobiohydrolase xynA (529 aa).

A signal peptide spans M1–A25. Residues Q26 to S456 form a catalytic region. N-linked (GlcNAc...) asparagine glycans are attached at residues N70 and N219. The Nucleophile role is filled by E234. E239 acts as the Proton donor in catalysis. An N-linked (GlcNAc...) asparagine glycan is attached at N413. The disordered stretch occupies residues N413 to Q438. Positions C425 to Q438 are enriched in polar residues. N455 carries N-linked (GlcNAc...) asparagine glycosylation. A thr-rich linker region spans residues T457–G493. Residues G460 to G491 are disordered. The CBM1 domain maps to G493–L529. Intrachain disulfides connect C501–C518 and C512–C528.

Belongs to the glycosyl hydrolase 7 (cellulase C) family.

The protein localises to the secreted. The enzyme catalyses Hydrolysis of (1-&gt;4)-beta-D-glucosidic linkages in cellulose and cellotetraose, releasing cellobiose from the non-reducing ends of the chains.. Cellobiose inhibits xynA at high concentrations. Its function is as follows. The biological conversion of cellulose to glucose generally requires three types of hydrolytic enzymes: (1) Endoglucanases which cut internal beta-1,4-glucosidic bonds; (2) Exocellobiohydrolases that cut the disaccharide cellobiose from the non-reducing end of the cellulose polymer chain; (3) Beta-1,4-glucosidases which hydrolyze the cellobiose and other short cello-oligosaccharides to glucose. The chain is 1,4-beta-D-glucan cellobiohydrolase xynA (xynA) from Talaromyces funiculosus (Fruitlet core rot fungus).